The primary structure comprises 554 residues: DNA mismatch repair protein MutL (554 aa).

This sequence belongs to the DNA mismatch repair MutL/HexB family.

This protein is involved in the repair of mismatches in DNA. It is required for dam-dependent methyl-directed DNA mismatch repair. May act as a 'molecular matchmaker', a protein that promotes the formation of a stable complex between two or more DNA-binding proteins in an ATP-dependent manner without itself being part of a final effector complex. The protein is DNA mismatch repair protein MutL of Crocosphaera subtropica (strain ATCC 51142 / BH68) (Cyanothece sp. (strain ATCC 51142)).